Consider the following 833-residue polypeptide: Probable glucan 1,3-beta-glucosidase D (833 aa).

Positions 1 to 33 are enriched in basic and acidic residues; it reads MPTHSRSRDRYGGRDSDREARYDYDYARRRYAT. The disordered stretch occupies residues 1-228; sequence MPTHSRSRDR…RKRQKKLAVV (228 aa). At 1–305 the chain is on the cytoplasmic side; it reads MPTHSRSRDR…GGRPFWKRKR (305 aa). A compositionally biased stretch (acidic residues) spans 34–45; that stretch reads DDDDDYDDDELE. Basic and acidic residues-rich tracts occupy residues 46–75 and 97–172; these read HDLTERRYRRDGYRPPRESRARGYYERDAE and YGDD…ETAA. Residues 183–196 are compositionally biased toward low complexity; the sequence is SASHLLSADALAKL. Residues 200–217 are compositionally biased toward basic and acidic residues; sequence YEKEERRKREIAKDAAKA. The helical; Signal-anchor for type II membrane protein transmembrane segment at 306–326 threads the bilayer; that stretch reads WIGLGALIIILVIVIPVAVVV. Residues 327–833 are Extracellular-facing; sequence SKKHDNKSDP…PDFGDLPEYY (507 aa). A disordered region spans residues 331–353; the sequence is DNKSDPADSQGTSPGKSNLDGLS. Asn332 carries N-linked (GlcNAc...) asparagine glycosylation. The span at 337-346 shows a compositional bias: polar residues; that stretch reads ADSQGTSPGK. Asn378, Asn383, Asn395, Asn548, Asn560, and Asn569 each carry an N-linked (GlcNAc...) asparagine glycan. Catalysis depends on Glu599, which acts as the Proton donor. 3 N-linked (GlcNAc...) asparagine glycosylation sites follow: Asn638, Asn671, and Asn691. Glu704 acts as the Nucleophile in catalysis.

It belongs to the glycosyl hydrolase 5 (cellulase A) family.

Its subcellular location is the cell membrane. It catalyses the reaction Successive hydrolysis of beta-D-glucose units from the non-reducing ends of (1-&gt;3)-beta-D-glucans, releasing alpha-glucose.. Its function is as follows. Glucosidase involved in the degradation of cellulosic biomass. Active on lichenan. This chain is Probable glucan 1,3-beta-glucosidase D (exgD), found in Aspergillus fumigatus (strain CBS 144.89 / FGSC A1163 / CEA10) (Neosartorya fumigata).